The chain runs to 224 residues: Glutathione peroxidase 3 (224 aa).

The N-terminal stretch at 1-18 (MAPGSVLSLAVALATIIG) is a signal peptide. Asn38 carries an N-linked (GlcNAc...) asparagine glycan. The active site involves Cys73.

It belongs to the glutathione peroxidase family.

It localises to the secreted. Its subcellular location is the extracellular space. The catalysed reaction is 2 glutathione + H2O2 = glutathione disulfide + 2 H2O. This Caenorhabditis elegans protein is Glutathione peroxidase 3 (gpx-3).